The following is a 308-amino-acid chain: N-acetylmuramic acid 6-phosphate etherase (308 aa).

One can recognise an SIS domain in the interval 62–225; it reads TAARLRQGGR…STGVMVQLGK (164 aa). The active-site Proton donor is glutamate 90. Glutamate 121 is a catalytic residue.

This sequence belongs to the GCKR-like family. MurNAc-6-P etherase subfamily. In terms of assembly, homodimer.

The enzyme catalyses N-acetyl-D-muramate 6-phosphate + H2O = N-acetyl-D-glucosamine 6-phosphate + (R)-lactate. It functions in the pathway amino-sugar metabolism; N-acetylmuramate degradation. Functionally, specifically catalyzes the cleavage of the D-lactyl ether substituent of MurNAc 6-phosphate, producing GlcNAc 6-phosphate and D-lactate. This chain is N-acetylmuramic acid 6-phosphate etherase, found in Thermosynechococcus vestitus (strain NIES-2133 / IAM M-273 / BP-1).